Consider the following 418-residue polypeptide: Gamma-glutamyl phosphate reductase (418 aa).

It belongs to the gamma-glutamyl phosphate reductase family.

The protein localises to the cytoplasm. It carries out the reaction L-glutamate 5-semialdehyde + phosphate + NADP(+) = L-glutamyl 5-phosphate + NADPH + H(+). It participates in amino-acid biosynthesis; L-proline biosynthesis; L-glutamate 5-semialdehyde from L-glutamate: step 2/2. Its function is as follows. Catalyzes the NADPH-dependent reduction of L-glutamate 5-phosphate into L-glutamate 5-semialdehyde and phosphate. The product spontaneously undergoes cyclization to form 1-pyrroline-5-carboxylate. The protein is Gamma-glutamyl phosphate reductase of Desulfosudis oleivorans (strain DSM 6200 / JCM 39069 / Hxd3) (Desulfococcus oleovorans).